The following is a 239-amino-acid chain: Large ribosomal subunit protein uL1 (239 aa).

Belongs to the universal ribosomal protein uL1 family. As to quaternary structure, part of the 50S ribosomal subunit.

Its function is as follows. Binds directly to 23S rRNA. The L1 stalk is quite mobile in the ribosome, and is involved in E site tRNA release. Protein L1 is also a translational repressor protein, it controls the translation of the L11 operon by binding to its mRNA. This chain is Large ribosomal subunit protein uL1, found in Acidothermus cellulolyticus (strain ATCC 43068 / DSM 8971 / 11B).